The sequence spans 440 residues: Alpha-ionylideneethane synthase aba3 (440 aa).

The protein belongs to the alpha-ionylideneethane synthase family.

It functions in the pathway hormone biosynthesis. In terms of biological role, alpha-ionylideneethane synthase; part of the gene cluster that mediates the biosynthesis of abscisic acid (ABA), a phytohormone that acts antagonistically toward salicylic acid (SA), jasmonic acid (JA) and ethylene (ETH) signaling, to impede plant defense responses. The first step of the pathway catalyzes the reaction from farnesyl diphosphate to alpha-ionylideneethane performed by the alpha-ionylideneethane synthase aba3 via a three-step reaction mechanism involving 2 neutral intermediates, beta-farnesene and allofarnesene. The cytochrome P450 monooxygenase aba1 might then be involved in the conversion of alpha-ionylideneethane to alpha-ionylideneacetic acid. Alpha-ionylideneacetic acid is further converted to abscisic acid in 2 steps involving the cytochrome P450 monooxygenase aba2 and the short-chain dehydrogenase/reductase aba4, via the intermediates 1'-deoxy-ABA or 1',4'-trans-diol-ABA, depending on the order of action of these 2 enzymes. Aba2 is responsible for the hydroxylation of carbon atom C-1' and aba4 might be involved in the oxidation of the C-4' carbon atom. The protein is Alpha-ionylideneethane synthase aba3 of Botryotinia fuckeliana (strain B05.10) (Noble rot fungus).